The chain runs to 461 residues: Cysteine--tRNA ligase (461 aa).

Cys28 provides a ligand contact to Zn(2+). The short motif at 30–40 (ITVYDLCHIGH) is the 'HIGH' region element. Residues Cys209, His234, and Glu238 each coordinate Zn(2+). Residues 266-270 (KMSKS) carry the 'KMSKS' region motif. ATP is bound at residue Lys269.

Belongs to the class-I aminoacyl-tRNA synthetase family. As to quaternary structure, monomer. Requires Zn(2+) as cofactor.

The protein resides in the cytoplasm. The catalysed reaction is tRNA(Cys) + L-cysteine + ATP = L-cysteinyl-tRNA(Cys) + AMP + diphosphate. The sequence is that of Cysteine--tRNA ligase from Shigella flexneri.